We begin with the raw amino-acid sequence, 155 residues long: Small ribosomal subunit protein uS7 (155 aa).

The protein belongs to the universal ribosomal protein uS7 family. In terms of assembly, part of the 30S ribosomal subunit. Contacts proteins S9 and S11.

In terms of biological role, one of the primary rRNA binding proteins, it binds directly to 16S rRNA where it nucleates assembly of the head domain of the 30S subunit. Is located at the subunit interface close to the decoding center, probably blocks exit of the E-site tRNA. The polypeptide is Small ribosomal subunit protein uS7 (Mycoplasma pneumoniae (strain ATCC 29342 / M129 / Subtype 1) (Mycoplasmoides pneumoniae)).